Here is a 237-residue protein sequence, read N- to C-terminus: Sugar fermentation stimulation protein homolog (237 aa).

Belongs to the SfsA family.

This Colwellia psychrerythraea (strain 34H / ATCC BAA-681) (Vibrio psychroerythus) protein is Sugar fermentation stimulation protein homolog.